Consider the following 466-residue polypeptide: Ribulose bisphosphate carboxylase large chain (466 aa).

At Lys-5 the chain carries N6,N6,N6-trimethyllysine. Substrate is bound by residues Asn-114 and Thr-164. Lys-166 acts as the Proton acceptor in catalysis. Lys-168 is a binding site for substrate. Mg(2+) contacts are provided by Lys-192, Asp-194, and Glu-195. The residue at position 192 (Lys-192) is an N6-carboxylysine. The Proton acceptor role is filled by His-285. Residues Arg-286, His-318, and Ser-370 each coordinate substrate.

It belongs to the RuBisCO large chain family. Type I subfamily. As to quaternary structure, heterohexadecamer of 8 large chains and 8 small chains. Mg(2+) is required as a cofactor.

It localises to the plastid. It is found in the chloroplast. It carries out the reaction 2 (2R)-3-phosphoglycerate + 2 H(+) = D-ribulose 1,5-bisphosphate + CO2 + H2O. It catalyses the reaction D-ribulose 1,5-bisphosphate + O2 = 2-phosphoglycolate + (2R)-3-phosphoglycerate + 2 H(+). Its function is as follows. RuBisCO catalyzes two reactions: the carboxylation of D-ribulose 1,5-bisphosphate, the primary event in carbon dioxide fixation, as well as the oxidative fragmentation of the pentose substrate in the photorespiration process. Both reactions occur simultaneously and in competition at the same active site. The chain is Ribulose bisphosphate carboxylase large chain from Lobelia sp.